A 206-amino-acid polypeptide reads, in one-letter code: Large ribosomal subunit protein uL4 (206 aa).

Residues 62–85 form a disordered region; sequence KPWRQKGTGRARQGSTRSPQFRGG.

It belongs to the universal ribosomal protein uL4 family. In terms of assembly, part of the 50S ribosomal subunit.

Functionally, one of the primary rRNA binding proteins, this protein initially binds near the 5'-end of the 23S rRNA. It is important during the early stages of 50S assembly. It makes multiple contacts with different domains of the 23S rRNA in the assembled 50S subunit and ribosome. Forms part of the polypeptide exit tunnel. In Rhodospirillum centenum (strain ATCC 51521 / SW), this protein is Large ribosomal subunit protein uL4.